The primary structure comprises 419 residues: Carboxypeptidase A1 (419 aa).

Positions 1–16 (MQGLLILSVLLGAALG) are cleaved as a signal peptide. The propeptide at 17–110 (KEDFVGHQVL…QEQMFASQSR (94 aa)) is activation peptide. The Peptidase M14 domain maps to 121 to 414 (TYHTLDEIYD…LGVLTIMEHT (294 aa)). His-179 and Glu-182 together coordinate Zn(2+). Substrate contacts are provided by residues 179 to 182 (HSRE), Arg-237, and 254 to 255 (NR). Cys-248 and Cys-271 form a disulfide bridge. Position 306 (His-306) interacts with Zn(2+). Substrate is bound by residues 307–308 (SY) and Tyr-358. The active-site Proton donor/acceptor is Glu-380.

The protein belongs to the peptidase M14 family. Monomer. May form a complex with proelastase 2. Zn(2+) is required as a cofactor. As to expression, pancreas.

It localises to the secreted. The catalysed reaction is Release of a C-terminal amino acid, but little or no action with -Asp, -Glu, -Arg, -Lys or -Pro.. It carries out the reaction leukotriene C4 + H2O = leukotriene F4 + glycine. Inhibited by interaction with the S.magnifica carboxypeptidase inhibitor SmCI. In terms of biological role, carboxypeptidase that catalyzes the release of a C-terminal amino acid, but has little or no action with -Asp, -Glu, -Arg, -Lys or -Pro. Catalyzes the conversion of leukotriene C4 to leukotriene F4 via the hydrolysis of an amide bond. The polypeptide is Carboxypeptidase A1 (CPA1) (Bos taurus (Bovine)).